Consider the following 167-residue polypeptide: Early nodulin-like protein 16 (167 aa).

The first 24 residues, 1–24, serve as a signal peptide directing secretion; sequence MARVAVLVAGAVLAFLLAATNVTA. The Phytocyanin domain maps to 25–126; sequence KRWTVGDNKF…GMKLAVLVEK (102 aa). N-linked (GlcNAc...) asparagine glycans are attached at residues Asn40, Asn71, Asn86, and Asn99. A disulfide bond links Cys78 and Cys114. Asn138 carries GPI-anchor amidated asparagine lipidation. Residues 139-167 constitute a propeptide, removed in mature form; the sequence is SARRTFSVSGFAYQFLIPVAVFAAVGTRY.

This sequence belongs to the early nodulin-like (ENODL) family.

Its subcellular location is the cell membrane. May act as a carbohydrate transporter. This is Early nodulin-like protein 16 from Arabidopsis thaliana (Mouse-ear cress).